We begin with the raw amino-acid sequence, 445 residues long: Probable phosphoglucosamine mutase (445 aa).

The active-site Phosphoserine intermediate is Ser99. Mg(2+) is bound by residues Ser99, Asp238, Asp240, and Asp242. Residue Ser99 is modified to Phosphoserine.

The protein belongs to the phosphohexose mutase family. Requires Mg(2+) as cofactor. Activated by phosphorylation.

It carries out the reaction alpha-D-glucosamine 1-phosphate = D-glucosamine 6-phosphate. In terms of biological role, catalyzes the conversion of glucosamine-6-phosphate to glucosamine-1-phosphate. This chain is Probable phosphoglucosamine mutase, found in Methanobrevibacter smithii (strain ATCC 35061 / DSM 861 / OCM 144 / PS).